We begin with the raw amino-acid sequence, 1437 residues long: MAAMQPAAQLQFQNLMSPSGPSLPQPTPIHQEKVAKLCPQLQHDFYPSEELAVLPSQEVPRLRAVVESQAFRNILVDEMDMMVSRAATVIQASWKGYRLRQKLISQMTAAKAIQEAWRRFSTRRLMHSNRLTVKKAKREDEEDIPYHQPQQVRFHAPEDQPPVMVTKETQFPSFDNLVPSQATAGPCASRVPGGGLHPQYVINRLTVPKYQPCMLTKTFRSSCLMRHLEGDSLKIRHVASKTIKVGALEAAATGRYGQAMHGSLKTQTQAHTESDVPKAPLRIYPVNKTHTKVCPMAAAVPESSATMSTAPRSAPQARPTSPATVMKMQATTSPTSPVIRLPAPVGPNSSLSNTTPQMQVRYMMPGARIQPPGSAVASTIKALPHFGAPVMKVPLQTGPGFTMTKTSLQMRPMTRSQAQTYTVSTSSKTSPSSPTVKPSPQTRLAAMLTKTPAQLRSVAAVFRTLCGGTTEAVASSPRCSPQSPVVAGNTPSQVHLNSTRTKVTVSTKQATTVVKVNSQSYLGRCGSQGNLDTIVPKPPATYPLEVEKMKSCPARSPKKEAALKTNTTIAARALSWTKMMEDRSKALTQIKQRAEIIKVHFRVYMPEEIPVTLTQAQLAVPLTKSSSQIQPPPCHARTQPTSPFCKAVSQSCMPSGLAHGTPEGQRPPVGLSASLSSSPLAAHLMSLTAQLQPACEQARSVSRDHLTRSCPASASLQARSSGTIVPPEVYPNTYSPTSAPQHHMASLLAKSSSQLHPPAEHAKTMNTKTTKAACQVCPSTKLSKAPSLAQLITCLAKVPSQAQLATETAKCLLAAHPTTDHRSKTQSQTFLSSSKASVQLWQHLGTLSTGSRAKPDDRSVAQPQLHSHAPNKTMQNPRSVVTDSQGMLIPLMTPSGHPVCNAESWGDSGRAQTPPPSPVPNQAVPCHDDLAASVASLCADLVAMLGSPEDLRTLLVKTLSQGEVRTALSQALSREVLGPSVVKALPQGMLGMALMKALSWGELGISLSRALSRGELRPELNKATQGKLAEVLCKALTEEERATLSQALCQGELGAVFTQSLAQMAQRTGTFLPKATSKTVGSRMTTAPAPVEVTCSGSLSVAWGPAMGPVGARCSKGPVDAGLASGQSWNSKVPNVSVRATAHAGAPQGVWYPSRGHKPWDPIGAEAELDRKPSAELLMSVQGMEKVVVQAVVTIQACARGYLVRRTVKVWHQWATIIQATWRGYRVRRNLERLFRATTIIQAAWRGYCIRRARARQVLLPIAWPEHSGRTKGTLDNRNSSEHRCFLSCQPDVCSVCQSLGPPVESPPSVVMLVGSQPRTCHVCGHTLSTRVVQGFGQGISGQPVSRWASASQQNTLLSQQHRACTIIQAAWKGYRTRRQLSQKQSAAKMVQAVWRGHYTRSCLTTDALLGTGGPWSISRDTSRHSSRAYSLHWPGV.

An IQ 1 domain is found at 84-112 (SRAATVIQASWKGYRLRQKLISQMTAAKA). Disordered stretches follow at residues 332-353 (TSPT…SLSN), 416-440 (SQAQ…KPSP), and 848-878 (STGS…QNPR). A compositionally biased stretch (low complexity) spans 422–440 (TVSTSSKTSPSSPTVKPSP). Residues 861 to 878 (AQPQLHSHAPNKTMQNPR) are compositionally biased toward polar residues. 5 consecutive IQ domains span residues 1190 to 1216 (QAVV…QWAT), 1217 to 1239 (IIQA…RATT), 1240 to 1258 (IIQA…ARQV), 1361 to 1389 (QHRA…SAAK), and 1390 to 1413 (MVQA…LGTG).

Interacts with calmodulin. Expressed in testis, in elongating spermatids (at protein level).

In terms of biological role, essential for spermiogenesis and fertilization. May be required for manchette assembly in elongating spermatids. In Mus musculus (Mouse), this protein is IQ domain-containing protein N (Iqcn).